Here is an 801-residue protein sequence, read N- to C-terminus: Transcription initiation factor TFIID subunit 5 (801 aa).

Residues 1–69 (MAALAEEQTE…GDGGTPKPGV (69 aa)) form a disordered region. Over residues 30–51 (DGAGEGSGGTPNNGPNGGGGGN) the composition is skewed to gly residues. Residues 93–125 (HDRQTLLAVLQFLRQSNLREAEEALRREARLLE) form the LisH domain. Disordered stretches follow at residues 156–176 (VPGS…SVFS) and 385–438 (VPLD…DSDK). Over residues 385-396 (VPLDDEDEEGEN) the composition is skewed to acidic residues. Residues 408 to 419 (KDSIGSKSKKQD) show a composition bias toward basic and acidic residues. 6 WD repeats span residues 469-508 (NAYQ…LRSV), 542-581 (GHSG…CLVG), 584-625 (GHNY…RIFA), 626-667 (GHLA…RIFT), 668-707 (GHKG…MVGE), and 710-749 (GHTD…EDLE).

The protein belongs to the WD repeat TAF5 family. In terms of assembly, homodimer. Component of the TFIID basal transcription factor complex, composed of TATA-box-binding protein TBP, and a number of TBP-associated factors (TAFs), including TAF1, TAF2, TAF3, TAF4, TAF5, TAF6, TAF7, TAF8, TAF9, TAF10, TAF11, TAF12 and TAF13. The TFIID complex structure can be divided into 3 modules TFIID-A, TFIID-B, and TFIID-C. TAF5 forms the TFIID-A module together with TAF3 and TBP, and in TFIID-B with TAF8. Component of the TFTC-HAT complex, at least composed of TAF5L, TAF6L, TADA3L, SUPT3H/SPT3, TAF2, TAF4, TAF5, GCN5L2/GCN5, TAF10 and TRRAP. TBP is not part of the TFTC-HAT complex. Interacts strongly with the histone H4-related TAF6 and the histone H3-related TAF9, as well as a stable complex comprised of both TAF6 and TAF9. Apparently weaker interactions with TBP, TAF1, TAF11, and TAF12, but not TAF7, also have been observed.

It localises to the nucleus. Functionally, the TFIID basal transcription factor complex plays a major role in the initiation of RNA polymerase II (Pol II)-dependent transcription. TFIID recognizes and binds promoters with or without a TATA box via its subunit TBP, a TATA-box-binding protein, and promotes assembly of the pre-initiation complex (PIC). The TFIID complex consists of TBP and TBP-associated factors (TAFs), including TAF1, TAF2, TAF3, TAF4, TAF5, TAF6, TAF7, TAF8, TAF9, TAF10, TAF11, TAF12 and TAF13. The TFIID complex structure can be divided into 3 modules TFIID-A, TFIID-B, and TFIID-C. TAF5 is involved in two modules of TFIID, in TFIID-A together with TAF3 and TBP, and in TFIID-B with TAF8. Involved in contacts between TFIID and TFIIF in the PIC. This chain is Transcription initiation factor TFIID subunit 5 (Taf5), found in Mus musculus (Mouse).